The sequence spans 307 residues: D-alanine--D-alanine ligase (307 aa).

One can recognise an ATP-grasp domain in the interval 104–301; that stretch reads RTAFLAAGLP…FVSLCRWMVE (198 aa). 130–183 is an ATP binding site; sequence PLPRPFVIKPANEGSAVGVHILHEGDNRRTEIARSWSFGGQALVEEYIPGRELT. Residues D251, E268, and N270 each contribute to the Mg(2+) site.

Belongs to the D-alanine--D-alanine ligase family. Mg(2+) serves as cofactor. The cofactor is Mn(2+).

The protein resides in the cytoplasm. It catalyses the reaction 2 D-alanine + ATP = D-alanyl-D-alanine + ADP + phosphate + H(+). Its pathway is cell wall biogenesis; peptidoglycan biosynthesis. In terms of biological role, cell wall formation. The protein is D-alanine--D-alanine ligase of Granulibacter bethesdensis (strain ATCC BAA-1260 / CGDNIH1).